An 88-amino-acid chain; its full sequence is Co-chaperonin GroES (88 aa).

It belongs to the GroES chaperonin family. As to quaternary structure, heptamer of 7 subunits arranged in a ring. Interacts with the chaperonin GroEL.

It is found in the cytoplasm. Functionally, together with the chaperonin GroEL, plays an essential role in assisting protein folding. The GroEL-GroES system forms a nano-cage that allows encapsulation of the non-native substrate proteins and provides a physical environment optimized to promote and accelerate protein folding. GroES binds to the apical surface of the GroEL ring, thereby capping the opening of the GroEL channel. The sequence is that of Co-chaperonin GroES from Treponema denticola (strain ATCC 35405 / DSM 14222 / CIP 103919 / JCM 8153 / KCTC 15104).